The primary structure comprises 493 residues: D-aminoacyl-tRNA deacylase (493 aa).

The span at 22–37 shows a compositional bias: basic and acidic residues; it reads DLGDWERRDDPSRPDA. Disordered stretches follow at residues 22-44 and 441-493; these read DLGD…GTYY and PEGP…EPSE.

Belongs to the DtdA deacylase family. In terms of assembly, monomer. The cofactor is Zn(2+).

The catalysed reaction is a D-aminoacyl-tRNA + H2O = a tRNA + a D-alpha-amino acid + H(+). The enzyme catalyses glycyl-tRNA(Ala) + H2O = tRNA(Ala) + glycine + H(+). D-aminoacyl-tRNA deacylase with broad substrate specificity. By recycling D-aminoacyl-tRNA to D-amino acids and free tRNA molecules, this enzyme counteracts the toxicity associated with the formation of D-aminoacyl-tRNA entities in vivo. The protein is D-aminoacyl-tRNA deacylase of Halorubrum lacusprofundi (strain ATCC 49239 / DSM 5036 / JCM 8891 / ACAM 34).